Reading from the N-terminus, the 131-residue chain is Pancreatic polypeptide prohormone (131 aa).

A signal peptide spans 1-29; that stretch reads MAAAHRCLFLLLLSTCVALLLQPPLGALG. Tyr-65 carries the post-translational modification Tyrosine amide.

The protein belongs to the NPY family.

The protein localises to the secreted. Its function is as follows. Hormone secreted by pancreatic cells that acts as a regulator of pancreatic and gastrointestinal functions probably by signaling through the G protein-coupled receptor NPY4R2. This chain is Pancreatic polypeptide prohormone (PPY), found in Bos taurus (Bovine).